The primary structure comprises 317 residues: MIMRFGYVSHAMALWDCSPAKTITFTSFQKLSKQEREDKLYDVTKQNLEHTLRILHYNIAHEIPLYRLSSSIVPLATHPEVEFDYIGAFTPLWRKIGALIKEHNLRISFHPNQFTLFTSDKPHITTNAITDMTYHYKVLDAIGIADSSYINIHVGGAYGNKEKAIERFHENIKKLPAHIKKQMTLENDDKTYTTAETLSICQKEKIPFVFDYHHHMANLCEEPLEELLPAIFETWSHTNIVPKVHISSPKSKKEFRAHAEYIDLEFIKPFLHVAKKINHNFDIMIESKQKDLAMLQFIQELSSIRGIKRISSSTLQW.

Belongs to the uve1/UvsE family.

Its function is as follows. Component in a DNA repair pathway. Removal of UV LIGHT damaged nucleotides. Recognizes pyrimidine dimers and cleave a phosphodiester bond immediately 5' to the lesion. This chain is UV DNA damage endonuclease, found in Bacillus thuringiensis subsp. konkukian (strain 97-27).